Consider the following 291-residue polypeptide: MSAAPVVDAEYMAEVERARRDLRALIASKSCAPIMLRLAWHDAGTYDKATKTGGPNGSIRFPQEYSHAANAGIKIAIDLLEPMKQKHPKITYADLYQLAGVVAVEVTGGPTIDYVPGRRDSSDSPEEGRLPDAKKGAAHLREVFYRMGLSDKDIVALSGGHTLGKARPERSGFDGAWTKDPLKFDNSYFIELLKENSEGLLKLPTDKALVEDPTFRRYVELYAKDEDAFFRDYAESHKKLSELGFTPPRSAFIYKSCQKPKSLLMQTAAGVAVAAAVVAWAYLCESNKRLG.

Residue His-41 is the Proton acceptor of the active site. Residues 114 to 133 (YVPGRRDSSDSPEEGRLPDA) are disordered. The segment covering 116 to 133 (PGRRDSSDSPEEGRLPDA) has biased composition (basic and acidic residues). Residue His-161 coordinates heme b. 3 residues coordinate K(+): Thr-162, Thr-178, and Asp-185. A helical membrane pass occupies residues 263-283 (LLMQTAAGVAVAAAVVAWAYL).

It belongs to the peroxidase family. Ascorbate peroxidase subfamily. The cofactor is heme b. In terms of tissue distribution, expressed in stems.

The protein resides in the peroxisome membrane. It catalyses the reaction L-ascorbate + H2O2 = L-dehydroascorbate + 2 H2O. Its function is as follows. Plays a key role in hydrogen peroxide removal. This is Probable L-ascorbate peroxidase 3, peroxisomal from Oryza sativa subsp. japonica (Rice).